Here is a 448-residue protein sequence, read N- to C-terminus: Probable cysteine protease ATG4 (448 aa).

A compositionally biased stretch (low complexity) spans 69 to 78; it reads PAPIATPGTT. Residues 69–90 form a disordered region; the sequence is PAPIATPGTTNRQAIDTPPDSL. Residue Cys-168 is the Nucleophile of the active site. Active-site residues include Asp-341 and His-343.

Belongs to the peptidase C54 family.

It is found in the cytoplasm. The protein localises to the nucleus. The protein resides in the preautophagosomal structure. It catalyses the reaction [protein]-C-terminal L-amino acid-glycyl-phosphatidylethanolamide + H2O = [protein]-C-terminal L-amino acid-glycine + a 1,2-diacyl-sn-glycero-3-phosphoethanolamine. Functionally, cysteine protease that plays a key role in cytoplasm to vacuole transport (Cvt) and autophagy by mediating both proteolytic activation and delipidation of ATG8. Required for selective autophagic degradation of the nucleus (nucleophagy) as well as for mitophagy which contributes to regulate mitochondrial quantity and quality by eliminating the mitochondria to a basal level to fulfill cellular energy requirements and preventing excess ROS production. The protease activity is required for proteolytic activation of ATG8: cleaves the C-terminal amino acid of ATG8 to reveal a C-terminal glycine. ATG8 ubiquitin-like activity requires the exposure of the glycine at the C-terminus for its conjugation to phosphatidylethanolamine (PE) and its insertion to membranes, which is necessary for autophagy. The ATG8-PE conjugate mediates tethering between adjacent membranes and stimulates membrane hemifusion, leading to expansion of the autophagosomal membrane during autophagy. In addition to the protease activity, also catalyzes deconjugation of PE-conjugated forms of ATG8 during macroautophagy: ATG8 delipidation is required to release the protein from membranes, which facilitates multiple events during macroautophagy, and especially for efficient autophagosome biogenesis, the assembly of ATG9-containing tubulovesicular clusters into phagophores/autophagosomes, and for the disassembly of PAS-associated ATG components. ATG8 delipidation by ATG4 also recycles ATG8-PE generated on inappropriate membranes to maintain a reservoir of unlipidated ATG8 that is required for autophagosome formation at the PAS. The protein is Probable cysteine protease ATG4 (ATG4) of Chaetomium globosum (strain ATCC 6205 / CBS 148.51 / DSM 1962 / NBRC 6347 / NRRL 1970) (Soil fungus).